The following is a 427-amino-acid chain: Glucose-6-phosphate isomerase (427 aa).

The Proton donor role is filled by glutamate 277. Active-site residues include histidine 298 and lysine 414.

It belongs to the GPI family.

It localises to the cytoplasm. The enzyme catalyses alpha-D-glucose 6-phosphate = beta-D-fructose 6-phosphate. It participates in carbohydrate biosynthesis; gluconeogenesis. Its pathway is carbohydrate degradation; glycolysis; D-glyceraldehyde 3-phosphate and glycerone phosphate from D-glucose: step 2/4. In terms of biological role, catalyzes the reversible isomerization of glucose-6-phosphate to fructose-6-phosphate. The chain is Glucose-6-phosphate isomerase from Mycoplasma mycoides subsp. mycoides SC (strain CCUG 32753 / NCTC 10114 / PG1).